The following is a 185-amino-acid chain: MQTIRKSLGLVLIMFVLCGFIFPLTVTALGQVLFPEQANGSLVKQDGKVIGSKLIGQQWTEPKYFHGRISAVNYNMNANEVKESGGPASGGSNYGNSNPELKKRVQETIKQEGKKISSDAVTASGSGLDPDITVDNAKQQVKRIAKERNIDASKINHLIDENKQASPMADDYVNVLKLNITLDKL.

The chain crosses the membrane as a helical span at residues 8–28; sequence LGLVLIMFVLCGFIFPLTVTA.

This sequence belongs to the KdpC family. The system is composed of three essential subunits: KdpA, KdpB and KdpC.

It localises to the cell membrane. Its subcellular location is the membrane raft. Functionally, part of the high-affinity ATP-driven potassium transport (or Kdp) system, which catalyzes the hydrolysis of ATP coupled with the electrogenic transport of potassium into the cytoplasm. This subunit acts as a catalytic chaperone that increases the ATP-binding affinity of the ATP-hydrolyzing subunit KdpB by the formation of a transient KdpB/KdpC/ATP ternary complex. The polypeptide is Potassium-transporting ATPase KdpC subunit 2 (Staphylococcus aureus (strain Mu50 / ATCC 700699)).